A 182-amino-acid polypeptide reads, in one-letter code: Protein SYM1 (182 aa).

3 helical membrane-spanning segments follow: residues threonine 51–tyrosine 70, leucine 98–glycine 118, and leucine 135–valine 155.

This sequence belongs to the peroxisomal membrane protein PXMP2/4 family.

It is found in the mitochondrion inner membrane. In terms of biological role, may be involved in cellular response to stress. Required to maintain mitochondrial DNA (mtDNA) integrity and stability. This is Protein SYM1 (SYM1) from Eremothecium gossypii (strain ATCC 10895 / CBS 109.51 / FGSC 9923 / NRRL Y-1056) (Yeast).